Here is a 172-residue protein sequence, read N- to C-terminus: Ribosome maturation factor RimM (172 aa).

In terms of domain architecture, PRC barrel spans 96–169 (EGYFYHFQLQ…RMEIKLLPGL (74 aa)).

The protein belongs to the RimM family. Binds ribosomal protein uS19.

It localises to the cytoplasm. Functionally, an accessory protein needed during the final step in the assembly of 30S ribosomal subunit, possibly for assembly of the head region. Essential for efficient processing of 16S rRNA. May be needed both before and after RbfA during the maturation of 16S rRNA. It has affinity for free ribosomal 30S subunits but not for 70S ribosomes. This chain is Ribosome maturation factor RimM, found in Syntrophomonas wolfei subsp. wolfei (strain DSM 2245B / Goettingen).